Consider the following 338-residue polypeptide: MTCILGIETSCDDTCVAVYDTNNGVIFNQVYSQSQLYNYYGGIVPEFSARKHLEILIVLLKNIFKKGKISKNLIDAVAYTAGPGLVGSLLVGASVGTALAYSLKVPVVLVNHMEAHLLTPMLENIKPTFPFLALLVSGGHTQLINALGIGEYELLGETLDDAVGEAFDKVAQALGLGYPGGSNLSKLARSGIPGTFNFPRPMINNSNLNFSFSGLKTFVLNIIQKNNNDFQIKANIAREFENAVVDSLVIKCIRALKKLKYTTLVVSGGVSKNDVLRMHINRIIKQYNYKVFYSHLKYCSDNAAMIAYVGSIRYKKFKSLNLEIKINPNWSIVDLAKI.

2 residues coordinate Fe cation: histidine 112 and histidine 116. Residues 135 to 139 (LVSGG), aspartate 168, glycine 181, and asparagine 273 each bind substrate. Position 301 (aspartate 301) interacts with Fe cation.

Belongs to the KAE1 / TsaD family. Requires Fe(2+) as cofactor.

The protein localises to the cytoplasm. The catalysed reaction is L-threonylcarbamoyladenylate + adenosine(37) in tRNA = N(6)-L-threonylcarbamoyladenosine(37) in tRNA + AMP + H(+). Functionally, required for the formation of a threonylcarbamoyl group on adenosine at position 37 (t(6)A37) in tRNAs that read codons beginning with adenine. Is involved in the transfer of the threonylcarbamoyl moiety of threonylcarbamoyl-AMP (TC-AMP) to the N6 group of A37, together with TsaE and TsaB. TsaD likely plays a direct catalytic role in this reaction. This chain is tRNA N6-adenosine threonylcarbamoyltransferase, found in Buchnera aphidicola subsp. Baizongia pistaciae (strain Bp).